Consider the following 189-residue polypeptide: Mediator of RNA polymerase II transcription subunit 10b (189 aa).

The tract at residues 1 to 22 is disordered; it reads MDPTQNTSAGIGGSNGTIRYQT.

The protein belongs to the Mediator complex subunit 10 family. Component of the Mediator complex.

Its subcellular location is the nucleus. In terms of biological role, component of the Mediator complex, a coactivator involved in the regulated transcription of nearly all RNA polymerase II-dependent genes. Mediator functions as a bridge to convey information from gene-specific regulatory proteins to the basal RNA polymerase II transcription machinery. The Mediator complex, having a compact conformation in its free form, is recruited to promoters by direct interactions with regulatory proteins and serves for the assembly of a functional preinitiation complex with RNA polymerase II and the general transcription factors. The protein is Mediator of RNA polymerase II transcription subunit 10b (MED10B) of Arabidopsis thaliana (Mouse-ear cress).